The chain runs to 103 residues: ATP synthase subunit f, mitochondrial (103 aa).

The transit peptide at 1-6 directs the protein to the mitochondrion; it reads MIFRRQ.

F-type ATP synthases have 2 components, the catalytic core F(1) and the membrane-embedded component F(0), linked together by a central stalk and a peripheral stalk. The central stalk, also called rotor shaft, is often seen as part of F(1). The peripheral stalk is seen as part of F(0). F(0) contains the membrane channel next to the rotor. F-type ATP synthases form dimers but each monomer functions independently in ATP generation. The dimer consists of 17 different polypeptides: ATP1 (subunit alpha, 3 molecules per monomer, part of F(1)), ATP2 (subunit beta, 3 copies per monomer, part of F(1)), ATP3 (subunit gamma, part of the central stalk), ATP4 (subunit b, part of the peripheral stalk), ATP5/OSCP (subunit 5/OSCP, part of the peripheral stalk), ATP6 (subunit a, part of the peripheral stalk), ATP7 (subunit d, part of the peripheral stalk), ATP8 (subunit 8, part of the peripheral stalk), OLI1 (subunit c, part of the rotor, 10 molecules per monomer), ATP14 (subunit h, part of the peripheral stalk), ATP15 (subunit epsilon, part of the central stalk), ATP16 (subunit delta, part of the central stalk), ATP17 (subunit f, part of the peripheral stalk), ATP18 (subunit i/j, part of the peripheral stalk), ATP19 (subunit k, dimer-specific, at interface between monomers), ATP20 (subunit g, at interface between monomers), TIM11 (subunit e, at interface between monomers).

The protein localises to the mitochondrion inner membrane. Mitochondrial membrane ATP synthase (F(1)F(0) ATP synthase or Complex V) produces ATP from ADP in the presence of a proton gradient across the membrane which is generated by electron transport complexes of the respiratory chain. F-type ATP synthases consist of two structural domains, F(1) - containing the extramembraneous catalytic core, and F(0) - containing the membrane proton channel, linked together by a central stalk and a peripheral stalk. During catalysis, ATP synthesis in the catalytic domain of F(1) is coupled via a rotary mechanism of the central stalk subunits to proton translocation. Part of the complex F(0) domain. Minor subunit located with subunit a/ATP6 in the membrane. The polypeptide is ATP synthase subunit f, mitochondrial (Yarrowia lipolytica (strain CLIB 122 / E 150) (Yeast)).